The sequence spans 88 residues: Small ribosomal subunit protein uS15 (88 aa).

Belongs to the universal ribosomal protein uS15 family. Part of the 30S ribosomal subunit. Forms a bridge to the 50S subunit in the 70S ribosome, contacting the 23S rRNA.

Functionally, one of the primary rRNA binding proteins, it binds directly to 16S rRNA where it helps nucleate assembly of the platform of the 30S subunit by binding and bridging several RNA helices of the 16S rRNA. Its function is as follows. Forms an intersubunit bridge (bridge B4) with the 23S rRNA of the 50S subunit in the ribosome. The protein is Small ribosomal subunit protein uS15 of Mesomycoplasma hyopneumoniae (strain 232) (Mycoplasma hyopneumoniae).